The primary structure comprises 368 residues: Alanine racemase (368 aa).

Lys40 serves as the catalytic Proton acceptor; specific for D-alanine. Lys40 bears the N6-(pyridoxal phosphate)lysine mark. A substrate-binding site is contributed by Arg136. The active-site Proton acceptor; specific for L-alanine is the Tyr263. Position 310 (Met310) interacts with substrate.

Belongs to the alanine racemase family. It depends on pyridoxal 5'-phosphate as a cofactor.

The enzyme catalyses L-alanine = D-alanine. The protein operates within amino-acid biosynthesis; D-alanine biosynthesis; D-alanine from L-alanine: step 1/1. In terms of biological role, catalyzes the interconversion of L-alanine and D-alanine. May also act on other amino acids. The chain is Alanine racemase (alr) from Streptococcus gordonii (strain Challis / ATCC 35105 / BCRC 15272 / CH1 / DL1 / V288).